Reading from the N-terminus, the 124-residue chain is Small ribosomal subunit protein uS13 (124 aa).

The interval 94 to 124 is disordered; that stretch reads KGLPVRGQRTKTNARTRKGPKRTVAGKKKAR.

This sequence belongs to the universal ribosomal protein uS13 family. As to quaternary structure, part of the 30S ribosomal subunit. Forms a loose heterodimer with protein S19. Forms two bridges to the 50S subunit in the 70S ribosome.

In terms of biological role, located at the top of the head of the 30S subunit, it contacts several helices of the 16S rRNA. In the 70S ribosome it contacts the 23S rRNA (bridge B1a) and protein L5 of the 50S subunit (bridge B1b), connecting the 2 subunits; these bridges are implicated in subunit movement. Contacts the tRNAs in the A and P-sites. This Pseudarthrobacter chlorophenolicus (strain ATCC 700700 / DSM 12829 / CIP 107037 / JCM 12360 / KCTC 9906 / NCIMB 13794 / A6) (Arthrobacter chlorophenolicus) protein is Small ribosomal subunit protein uS13.